Reading from the N-terminus, the 431-residue chain is GTPase Obg (431 aa).

Residues 1-158 form the Obg domain; that stretch reads MFVDQVKINV…REIRLELKVL (158 aa). The segment at 125 to 145 is disordered; the sequence is GNIHFASPKNPAPEIAENGEP. The OBG-type G domain occupies 159–335; the sequence is ADVGLVGFPS…LLQRTADMLA (177 aa). Residues 165 to 172, 190 to 194, 212 to 215, 282 to 285, and 316 to 318 contribute to the GTP site; these read GFPSVGKS, FTTLV, DLPG, NKMD, and SAL. Mg(2+) is bound by residues Ser172 and Thr192. Positions 353 to 431 constitute an OCT domain; it reads YNFQPEAEFT…IDDFTFEYMA (79 aa).

The protein belongs to the TRAFAC class OBG-HflX-like GTPase superfamily. OBG GTPase family. As to quaternary structure, monomer. Mg(2+) serves as cofactor.

It is found in the cytoplasm. Functionally, an essential GTPase which binds GTP, GDP and possibly (p)ppGpp with moderate affinity, with high nucleotide exchange rates and a fairly low GTP hydrolysis rate. Plays a role in control of the cell cycle, stress response, ribosome biogenesis and in those bacteria that undergo differentiation, in morphogenesis control. The polypeptide is GTPase Obg (Levilactobacillus brevis (strain ATCC 367 / BCRC 12310 / CIP 105137 / JCM 1170 / LMG 11437 / NCIMB 947 / NCTC 947) (Lactobacillus brevis)).